The primary structure comprises 161 residues: Immunity protein YezG (161 aa).

As to quaternary structure, monomer. Interacts with the C-terminus of cognate toxin YeeF, probably with 2:2 stoichiometry. The second YezG molecules binds with lower affinity.

Its subcellular location is the cytoplasm. Functionally, immunity component of an LXG toxin-immunity module. These modules promote kin selection, mediate competition in biofilms, and drive spatial segregation of different strains, indicating that LXG toxins may help avoid warfare between strains in biofilms. Neutralizes the toxic abilities of cognate toxin YeeF upon expression in E.coli and in vitro. This Bacillus spizizenii (strain ATCC 23059 / NRRL B-14472 / W23) (Bacillus subtilis subsp. spizizenii) protein is Immunity protein YezG.